We begin with the raw amino-acid sequence, 315 residues long: Transaldolase (315 aa).

Lys-131 functions as the Schiff-base intermediate with substrate in the catalytic mechanism.

It belongs to the transaldolase family. Type 1 subfamily. As to quaternary structure, homodimer.

Its subcellular location is the cytoplasm. The enzyme catalyses D-sedoheptulose 7-phosphate + D-glyceraldehyde 3-phosphate = D-erythrose 4-phosphate + beta-D-fructose 6-phosphate. It participates in carbohydrate degradation; pentose phosphate pathway; D-glyceraldehyde 3-phosphate and beta-D-fructose 6-phosphate from D-ribose 5-phosphate and D-xylulose 5-phosphate (non-oxidative stage): step 2/3. In terms of biological role, transaldolase is important for the balance of metabolites in the pentose-phosphate pathway. This is Transaldolase from Actinobacillus pleuropneumoniae serotype 5b (strain L20).